We begin with the raw amino-acid sequence, 171 residues long: Endoribonuclease YbeY (171 aa).

The Zn(2+) site is built by H126, H130, and H136.

This sequence belongs to the endoribonuclease YbeY family. Requires Zn(2+) as cofactor.

It localises to the cytoplasm. In terms of biological role, single strand-specific metallo-endoribonuclease involved in late-stage 70S ribosome quality control and in maturation of the 3' terminus of the 16S rRNA. This Rhizobium etli (strain ATCC 51251 / DSM 11541 / JCM 21823 / NBRC 15573 / CFN 42) protein is Endoribonuclease YbeY.